Consider the following 602-residue polypeptide: Adenylosuccinate synthetase (602 aa).

GTP contacts are provided by residues 74 to 80 and 104 to 106; these read GDEGKGK and GHT. The Proton acceptor role is filled by aspartate 75. Residues aspartate 75 and glycine 104 each contribute to the Mg(2+) site. IMP-binding positions include 75–78, 102–105, threonine 189, lysine 203, glutamine 315, threonine 331, and lysine 459; these read DEGK and NAGH. Histidine 105 functions as the Proton donor in the catalytic mechanism. Residue 455 to 461 coordinates substrate; it reads AVTKKPR. GTP is bound by residues arginine 461 and 589 to 591; that span reads GNG.

This sequence belongs to the adenylosuccinate synthetase family. As to quaternary structure, homodimer. It depends on Mg(2+) as a cofactor.

It is found in the cytoplasm. The catalysed reaction is IMP + L-aspartate + GTP = N(6)-(1,2-dicarboxyethyl)-AMP + GDP + phosphate + 2 H(+). Its pathway is purine metabolism; AMP biosynthesis via de novo pathway; AMP from IMP: step 1/2. Its function is as follows. Plays an important role in the salvage pathway for purine nucleotide biosynthesis. Catalyzes the first committed step in the biosynthesis of AMP from IMP. This Trypanosoma brucei brucei (strain 927/4 GUTat10.1) protein is Adenylosuccinate synthetase.